We begin with the raw amino-acid sequence, 44 residues long: Photosystem I reaction center subunit IX (44 aa).

Residues 7–27 (YLSVAPVLSTLSLGFLTGFLI) form a helical membrane-spanning segment.

It belongs to the PsaJ family.

The protein localises to the plastid membrane. Its function is as follows. May help in the organization of the PsaE and PsaF subunits. This chain is Photosystem I reaction center subunit IX, found in Cuscuta gronovii (Common dodder).